Consider the following 937-residue polypeptide: AP-2 complex subunit beta (937 aa).

Threonine 2 carries the N-acetylthreonine modification. Serine 4 carries the post-translational modification Phosphoserine. Lysine 265 carries the post-translational modification N6-acetyllysine. The tract at residues 593–617 (LPIHHGSTDAGDSPVGTTTTTNLEQ) is disordered. Polar residues predominate over residues 607 to 617 (VGTTTTTNLEQ). A phosphotyrosine mark is found at tyrosine 737 and tyrosine 928.

Belongs to the adaptor complexes large subunit family. Adaptor protein complex 2 (AP-2) is a heterotetramer composed of two large adaptins (alpha-type subunit AP2A1 or AP2A2 and beta-type subunit AP2B1), a medium adaptin (mu-type subunit AP2M1) and a small adaptin (sigma-type subunit AP2S1). Interacts with EPN1. Interacts with EPS15; clathrin competes with EPS15. Interacts with SNAP91; clathrin competes with SNAP91. Interacts with CLTC; clathrin competes with EPS15, SNAP91 and PIP5K1C. Interacts with LDLRAP1. Interacts with AMPH and BIN1. Interacts with ARF6 (GDP-bound). Interacts (dephosphorylated at Tyr-737) with ARRB1; phosphorylation of AP2B1 at Tyr-737 disrupts the interaction. Interacts with SLC2A8. Interacts with SCYL1 and SCYL2. Interacts with TGFBR1 and TGFBR2. Interacts with PIP5K1C; clathrin competes with PIP5K1C. Interacts with DENND1B. Interacts with FCHO1. Interacts with RFTN1. Interacts with KIAA1107. Together with AP2A1 or AP2A2 and AP2M1, it interacts with ADAM10; this interaction facilitates ADAM10 endocytosis from the plasma membrane during long-term potentiation in hippocampal neurons. Expressed in the brain (at protein level).

It localises to the cell membrane. Its subcellular location is the membrane. It is found in the coated pit. Its function is as follows. Component of the adaptor protein complex 2 (AP-2). Adaptor protein complexes function in protein transport via transport vesicles in different membrane traffic pathways. Adaptor protein complexes are vesicle coat components and appear to be involved in cargo selection and vesicle formation. AP-2 is involved in clathrin-dependent endocytosis in which cargo proteins are incorporated into vesicles surrounded by clathrin (clathrin-coated vesicles, CCVs) which are destined for fusion with the early endosome. The clathrin lattice serves as a mechanical scaffold but is itself unable to bind directly to membrane components. Clathrin-associated adaptor protein (AP) complexes which can bind directly to both the clathrin lattice and to the lipid and protein components of membranes are considered to be the major clathrin adaptors contributing the CCV formation. AP-2 also serves as a cargo receptor to selectively sort the membrane proteins involved in receptor-mediated endocytosis. AP-2 seems to play a role in the recycling of synaptic vesicle membranes from the presynaptic surface. AP-2 recognizes Y-X-X-[FILMV] (Y-X-X-Phi) and [ED]-X-X-X-L-[LI] endocytosis signal motifs within the cytosolic tails of transmembrane cargo molecules. AP-2 may also play a role in maintaining normal post-endocytic trafficking through the ARF6-regulated, non-clathrin pathway. During long-term potentiation in hippocampal neurons, AP-2 is responsible for the endocytosis of ADAM10. The AP-2 beta subunit acts via its C-terminal appendage domain as a scaffolding platform for endocytic accessory proteins; at least some clathrin-associated sorting proteins (CLASPs) are recognized by their [DE]-X(1,2)-F-X-X-[FL]-X-X-X-R motif. The AP-2 beta subunit binds to clathrin heavy chain, promoting clathrin lattice assembly; clathrin displaces at least some CLASPs from AP2B1 which probably then can be positioned for further coat assembly. The chain is AP-2 complex subunit beta (Ap2b1) from Mus musculus (Mouse).